The sequence spans 306 residues: MAASLHIILDTDPGIDDAAAIAAALFAPELDLQLMTTVAGNVSVEKTTRNGLQLLHFWDADVPLAQGAATPLLRPLRDAAYVHGESGMEGYDFVDHQRQPLAKPAFIAIRDVLMNAPEPMTLVAIGPLTNIALLLMHYPECRFNIHRLVIMGGSAGRGNFTPNAEFNIAVDPEAAAHVFRSGIEIVMCGLDVTNQAVLTPEYLATLPALNKTGGMLHALFSHYRSGSMQSGLRMHDLCAIAWLVRPELFTLQSCFVAVETQGQYTAGTTVVDIEGRLGQPANAQVALALDVDGFRQWVAEVFACAP.

His-235 is a catalytic residue.

It belongs to the IUNH family. RihC subfamily.

In terms of biological role, hydrolyzes both purine and pyrimidine ribonucleosides with a broad-substrate specificity. This Salmonella schwarzengrund (strain CVM19633) protein is Non-specific ribonucleoside hydrolase RihC.